A 491-amino-acid polypeptide reads, in one-letter code: Probable aspartyl aminopeptidase (491 aa).

H90 serves as a coordination point for Zn(2+). H168 contacts substrate. A Zn(2+)-binding site is contributed by D278. E315 contacts substrate. 2 residues coordinate Zn(2+): E316 and D361. D361, H364, K389, and Y396 together coordinate substrate. H455 serves as a coordination point for Zn(2+).

It belongs to the peptidase M18 family. Tetrahedron-shaped homododecamer built from six homodimers. Zn(2+) serves as cofactor.

The protein localises to the cytoplasm. The enzyme catalyses Release of an N-terminal aspartate or glutamate from a peptide, with a preference for aspartate.. Functionally, likely to play an important role in intracellular protein and peptide metabolism. The protein is Probable aspartyl aminopeptidase of Ricinus communis (Castor bean).